The following is a 491-amino-acid chain: Probable glycine dehydrogenase (decarboxylating) subunit 2 (491 aa).

The residue at position 273 (lysine 273) is an N6-(pyridoxal phosphate)lysine.

Belongs to the GcvP family. C-terminal subunit subfamily. As to quaternary structure, the glycine cleavage system is composed of four proteins: P, T, L and H. In this organism, the P 'protein' is a heterodimer of two subunits. Requires pyridoxal 5'-phosphate as cofactor.

The catalysed reaction is N(6)-[(R)-lipoyl]-L-lysyl-[glycine-cleavage complex H protein] + glycine + H(+) = N(6)-[(R)-S(8)-aminomethyldihydrolipoyl]-L-lysyl-[glycine-cleavage complex H protein] + CO2. The glycine cleavage system catalyzes the degradation of glycine. The P protein binds the alpha-amino group of glycine through its pyridoxal phosphate cofactor; CO(2) is released and the remaining methylamine moiety is then transferred to the lipoamide cofactor of the H protein. In Bacillus cereus (strain ATCC 10987 / NRS 248), this protein is Probable glycine dehydrogenase (decarboxylating) subunit 2.